Consider the following 1535-residue polypeptide: Lysine-specific demethylase 5D (1535 aa).

In terms of domain architecture, JmjN spans 14–55 (CPVFEPSWAEFQDPLGYIAKIRPIAEKSGICKIRPPADWQPP). The region spanning 79–169 (TRVKLNYLDQ…IIYPYEMFQS (91 aa)) is the ARID domain. The disordered stretch occupies residues 192-227 (PHSIPLRQSVQPSKFSSYSRRAKRLQPDPEPTEEDI). A compositionally biased stretch (polar residues) spans 197 to 210 (LRQSVQPSKFSSYS). Residues Lys-205, Lys-229, Lys-244, and Lys-272 each participate in a glycyl lysine isopeptide (Lys-Gly) (interchain with G-Cter in SUMO2) cross-link. Ser-291 and Ser-307 each carry phosphoserine. The segment at 314 to 364 (SYICQVCSRGDEDDKLLFCDGCDDNYHIFCLLPPLPEIPRGIWRCPKCILA) adopts a PHD-type 1 zinc-finger fold. Position 430 (Tyr-430) interacts with 2-oxoglutarate. One can recognise a JmjC domain in the interval 458-624 (EYATSGWNLN…AGRQCIEHYR (167 aa)). His-504 and Glu-506 together coordinate Fe cation. Residues Ser-512, Asn-514, and Lys-522 each contribute to the 2-oxoglutarate site. His-592 provides a ligand contact to Fe cation. A C5HC2 zinc finger spans residues 697-749 (CIKCKTTCFLSALACYDCPDGLVCLSHINDLCKCSSSRQYLRYRYTLDELPTM). Ser-884 bears the Phosphoserine mark. A PHD-type 2 zinc finger spans residues 1174–1235 (ICVCGQVPAG…DTKFLCPLCM (62 aa)). Ser-1342 bears the Phosphoserine mark. The disordered stretch occupies residues 1425–1519 (HQGSRTRSRA…KDSGSSAACP (95 aa)). Residues 1428-1441 (SRTRSRALERRRRQ) show a composition bias toward basic residues. Residues 1473–1487 (GREEEHYQEKADREN) show a composition bias toward basic and acidic residues. A compositionally biased stretch (polar residues) spans 1490 to 1517 (LTPSTDHSPSLKGNQNSLQHKDSGSSAA).

Belongs to the JARID1 histone demethylase family. As to quaternary structure, interacts withPCGF6, MSH5, ZMYND8, AR. L-ascorbate is required as a cofactor. Requires Fe(2+) as cofactor.

It is found in the nucleus. It carries out the reaction N(6),N(6),N(6)-trimethyl-L-lysyl(4)-[histone H3] + 3 2-oxoglutarate + 3 O2 = L-lysyl(4)-[histone H3] + 3 formaldehyde + 3 succinate + 3 CO2. Its function is as follows. Histone demethylase that specifically demethylates 'Lys-4' of histone H3, thereby playing a central role in histone code. Does not demethylate histone H3 'Lys-9', H3 'Lys-27', H3 'Lys-36', H3 'Lys-79' or H4 'Lys-20'. Demethylates trimethylated and dimethylated but not monomethylated H3 'Lys-4'. May play a role in spermatogenesis. Involved in transcriptional repression of diverse metastasis-associated genes; in this function seems to cooperate with ZMYND8. Suppresses prostate cancer cell invasion. Regulates androgen receptor (AR) transcriptional activity by demethylating H3K4me3 active transcription marks. The sequence is that of Lysine-specific demethylase 5D (KDM5D) from Pan troglodytes (Chimpanzee).